Consider the following 161-residue polypeptide: Large ribosomal subunit protein uL15 (161 aa).

Residues 1 to 43 are disordered; the sequence is MKLSDIADNAGARKKRMRVGRGIGSGKGKTSGRGGKGQTARSG. Gly residues predominate over residues 21–37; sequence RGIGSGKGKTSGRGGKG.

It belongs to the universal ribosomal protein uL15 family. In terms of assembly, part of the 50S ribosomal subunit.

In terms of biological role, binds to the 23S rRNA. The polypeptide is Large ribosomal subunit protein uL15 (Bradyrhizobium sp. (strain ORS 278)).